The following is a 250-amino-acid chain: 2,3-bisphosphoglycerate-dependent phosphoglycerate mutase (250 aa).

13 residues coordinate (2R)-2,3-bisphosphoglycerate: arginine 10, histidine 11, asparagine 17, glycine 24, arginine 62, glutamate 89, tyrosine 92, lysine 100, arginine 116, arginine 117, histidine 184, glycine 185, and asparagine 186. Residue histidine 11 is the Tele-phosphohistidine intermediate of the active site. Position 24 (glycine 24) interacts with (2R)-3-phosphoglycerate. (2R)-3-phosphoglycerate-binding residues include glutamate 89, tyrosine 92, lysine 100, arginine 116, and arginine 117. The active-site Proton donor/acceptor is glutamate 89. Asparagine 186 lines the (2R)-3-phosphoglycerate pocket.

This sequence belongs to the phosphoglycerate mutase family. BPG-dependent PGAM subfamily. Ubiquitously expressed with the highest expression in the sub-tegumental muscle layer (at protein level). Expressed in the tegument (at protein level).

Its subcellular location is the tegument. The catalysed reaction is (2R)-2-phosphoglycerate = (2R)-3-phosphoglycerate. It functions in the pathway carbohydrate degradation; glycolysis; pyruvate from D-glyceraldehyde 3-phosphate: step 3/5. With respect to regulation, strongly activated by 2,3-bisphosphoglycerate (2,3-BPG). Inhibited by vanadate in a dose-dependent manner. Functionally, catalyzes interconversion of 3- and 2-phosphoglycerate with 2,3-bisphosphoglycerate (2,3-BPG) as the primer of the reaction. Schistosomula have significant surface phosphoglycerate mutase activity also without 2,3-BPG. Binds human plasminogen and enhances its conversion to active thrombolytic plasmin in the presence of human tissue plasminogen activator (tPA) in vitro. Host-interactive surface protein, which may degrade vascular blood clots surrounding the worm in vivo and thus may help survival of the parasite in its host microenvironment. This is 2,3-bisphosphoglycerate-dependent phosphoglycerate mutase from Schistosoma mansoni (Blood fluke).